The following is a 663-amino-acid chain: MSARLPVLSPPRWPRLLLLSLLLLGAVPGPRRSGGFYLPGLAPVNFCDEEKKSDECKAEIELFVNRLDSVESVLPYEYTAFDFCQASEGKRPSENLGQVLFGERIEPSPYKFTFNKEETCKLVCTKTYHTEKAEDKQKLEFLKKSMLLNYQHHWIVDNMPVTWCYDVEDGQRFCNPGFPIGCYITDKGHAKDACVINSEFHERDTFYIFNHVDIKIYYHVVETGSMGARLVAAKLEPKSFKHTHIDKPDCSGPPMDISNKASGEIKIAYTYSVSFEEDKKIRWASRWDYILESMPHTHIQWFSIMNSLVIVLFLSGMVAMIMLRTLHKDIARYNQMDSTEDAQEEFGWKLVHGDIFRPPRKGMLLSVFLGSGTQILIMTFVTLFFACLGFLSPANRGALMTCAVVLWVLLGTPAGYVAARFYKSFGGEKWKTNVLLTSFLCPGIVFADFFIMNLILWGEGSSAAIPFGTLVAILALWFCISVPLTFIGAYFGFKKNAIEHPVRTNQIPRQIPEQSFYTKPLPGIIMGGILPFGCIFIQLFFILNSIWSHQMYYMFGFLFLVFIILVITCSEATILLCYFHLCAEDYHWQWRSFLTSGFTAVYFLIYAVHYFFSKLQITGTASTILYFGYTMIMVLIFFLFTGTIGFFACFWFVTKIYSVVKVD.

A signal peptide spans Met-1–Pro-28. At Gly-29–Gln-300 the chain is on the lumenal side. The chain crosses the membrane as a helical span at residues Trp-301 to Ile-321. Residues Met-322–Gln-374 lie on the Cytoplasmic side of the membrane. Residues Ile-375–Asn-395 form a helical membrane-spanning segment. Topologically, residues Arg-396–Ala-398 are lumenal. The chain crosses the membrane as a helical span at residues Leu-399–Ala-419. The Cytoplasmic portion of the chain corresponds to Arg-420–Thr-437. Residues Ser-438–Gly-458 form a helical membrane-spanning segment. Residues Glu-459–Pro-466 lie on the Lumenal side of the membrane. Residues Phe-467–Ile-487 traverse the membrane as a helical segment. The Cytoplasmic portion of the chain corresponds to Gly-488–Pro-522. A helical membrane pass occupies residues Gly-523–Leu-543. Residues Asn-544–Met-554 are Lumenal-facing. The helical transmembrane segment at Phe-555–Leu-575 threads the bilayer. Residues Leu-576 to Arg-591 are Cytoplasmic-facing. The helical transmembrane segment at Ser-592–Phe-612 threads the bilayer. The Lumenal portion of the chain corresponds to Ser-613–Met-631. The chain crosses the membrane as a helical span at residues Ile-632–Phe-652. At Val-653–Asp-663 the chain is on the cytoplasmic side.

It belongs to the nonaspanin (TM9SF) (TC 9.A.2) family.

Its subcellular location is the endosome membrane. It localises to the golgi outpost. The protein localises to the cytoplasm. It is found in the cytoskeleton. The protein resides in the microtubule organizing center. Functionally, in the intracellular compartments, may function as a channel or small molecule transporter. The chain is Transmembrane 9 superfamily member 2 (TM9SF2) from Pongo abelii (Sumatran orangutan).